Here is a 418-residue protein sequence, read N- to C-terminus: Actin-related protein 3B (418 aa).

The protein belongs to the actin family. ARP3 subfamily. Interacts with the Arp2/3 complex composed of ARP2, ARP3, ARPC1B, ARPC1B/p41-ARC, ARPC2/p34-ARC, ARPC3/p21-ARC, ARPC4/p20-ARC and ARPC5/p16-ARC. As to expression, detected in fetal brain. Detected throughout the adult brain, in neurons from gray matter, but not in white matter. Detected in liver, skeletal muscle and pancreas. Detected in lung adenocarcinoma cells with low metastatic potential, but not in lung adenocarcinoma cells with high metastatic potential.

Its subcellular location is the cytoplasm. It localises to the cytoskeleton. The protein resides in the cell projection. Functionally, plays a role in the organization of the actin cytoskeleton. May function as ATP-binding component of the Arp2/3 complex which is involved in regulation of actin polymerization and together with an activating nucleation-promoting factor (NPF) mediates the formation of branched actin networks. May decrease the metastatic potential of tumors. This is Actin-related protein 3B (ACTR3B) from Homo sapiens (Human).